Consider the following 230-residue polypeptide: Large ribosomal subunit protein uL1 (230 aa).

Belongs to the universal ribosomal protein uL1 family. As to quaternary structure, part of the 50S ribosomal subunit.

In terms of biological role, binds directly to 23S rRNA. The L1 stalk is quite mobile in the ribosome, and is involved in E site tRNA release. Protein L1 is also a translational repressor protein, it controls the translation of the L11 operon by binding to its mRNA. The sequence is that of Large ribosomal subunit protein uL1 from Leuconostoc mesenteroides subsp. mesenteroides (strain ATCC 8293 / DSM 20343 / BCRC 11652 / CCM 1803 / JCM 6124 / NCDO 523 / NBRC 100496 / NCIMB 8023 / NCTC 12954 / NRRL B-1118 / 37Y).